We begin with the raw amino-acid sequence, 217 residues long: Probable transaldolase (217 aa).

The Schiff-base intermediate with substrate role is filled by Lys-83.

It belongs to the transaldolase family. Type 3B subfamily.

It localises to the cytoplasm. It carries out the reaction D-sedoheptulose 7-phosphate + D-glyceraldehyde 3-phosphate = D-erythrose 4-phosphate + beta-D-fructose 6-phosphate. It participates in carbohydrate degradation; pentose phosphate pathway; D-glyceraldehyde 3-phosphate and beta-D-fructose 6-phosphate from D-ribose 5-phosphate and D-xylulose 5-phosphate (non-oxidative stage): step 2/3. Functionally, transaldolase is important for the balance of metabolites in the pentose-phosphate pathway. This is Probable transaldolase from Coprothermobacter proteolyticus (strain ATCC 35245 / DSM 5265 / OCM 4 / BT).